A 346-amino-acid chain; its full sequence is Magnesium-protoporphyrin IX monomethyl ester [oxidative] cyclase (346 aa).

The protein belongs to the AcsF family. It depends on Fe cation as a cofactor.

It catalyses the reaction Mg-protoporphyrin IX 13-monomethyl ester + 3 NADPH + 3 O2 + 2 H(+) = 3,8-divinyl protochlorophyllide a + 3 NADP(+) + 5 H2O. It participates in porphyrin-containing compound metabolism; chlorophyll biosynthesis (light-independent). Catalyzes the formation of the isocyclic ring in chlorophyll biosynthesis. Mediates the cyclase reaction, which results in the formation of divinylprotochlorophyllide (Pchlide) characteristic of all chlorophylls from magnesium-protoporphyrin IX 13-monomethyl ester (MgPMME). The sequence is that of Magnesium-protoporphyrin IX monomethyl ester [oxidative] cyclase from Gloeobacter violaceus (strain ATCC 29082 / PCC 7421).